Reading from the N-terminus, the 259-residue chain is Anti-Pycsar protein Apyc1 (259 aa).

A beta-lactamase-like region spans residues 21 to 233; it reads YNNSALVTFT…KQQNKIFLMH (213 aa). Residues H64, H66, D68, H69, H154, D178, and H233 each coordinate Zn(2+).

The protein belongs to the anti-Pycsar protein Apyc1 family. As to quaternary structure, homodimer. It depends on Zn(2+) as a cofactor.

It carries out the reaction 3',5'-cyclic CMP + H2O = CMP + H(+). The catalysed reaction is 3',5'-cyclic UMP + H2O = UMP + H(+). In terms of biological role, counteracts the host Pycsar antiviral defense system. Phosphodiesterase that enables metal-dependent hydrolysis of host cyclic nucleotide Pycsar defense signals such as cCMP and cUMP. The sequence is that of Anti-Pycsar protein Apyc1 from Bacillus subtilis.